Here is a 501-residue protein sequence, read N- to C-terminus: Cytochrome P450 4d2 (501 aa).

E311 and C449 together coordinate heme.

It belongs to the cytochrome P450 family. Requires heme as cofactor.

It localises to the endoplasmic reticulum membrane. Its subcellular location is the microsome membrane. In terms of biological role, involved in the metabolism of insect hormones and in the breakdown of synthetic insecticides. This is Cytochrome P450 4d2 (Cyp4d2) from Drosophila melanogaster (Fruit fly).